A 64-amino-acid polypeptide reads, in one-letter code: Large ribosomal subunit protein bL28 (64 aa).

The protein belongs to the bacterial ribosomal protein bL28 family.

This Campylobacter lari (strain RM2100 / D67 / ATCC BAA-1060) protein is Large ribosomal subunit protein bL28.